A 54-amino-acid chain; its full sequence is Kazal-type inhibitor-like protein (54 aa).

A Kazal-like domain is found at 1–54 (MKVNCKGYPTKFCFGKPLPHCASDGKTYPNRCRFCNAFVKSHGLITLRYYGKCK). 3 disulfides stabilise this stretch: Cys5/Cys35, Cys13/Cys32, and Cys21/Cys53.

In terms of assembly, may form disulfide-linked dimers or trimers (in vitro). As to expression, expressed by the venom gland.

It is found in the secreted. Partially inhibits trypsin in vitro at slightly acidic pH and concentrations in excess of 0.3 mM. Has no protease inhibitory activity at neutral or basic pH. Has no antibacterial activity. Shows no toxicity in vertebrates apart from transient paw edema in mouse. The sequence is that of Kazal-type inhibitor-like protein from Bothriechis schlegelii (Eyelash palm pitviper).